A 210-amino-acid polypeptide reads, in one-letter code: Ribosomal RNA small subunit methyltransferase G (210 aa).

S-adenosyl-L-methionine contacts are provided by residues Gly-76, Leu-81, 127–128 (VE), and Arg-142.

The protein belongs to the methyltransferase superfamily. RNA methyltransferase RsmG family.

The protein localises to the cytoplasm. The catalysed reaction is guanosine(527) in 16S rRNA + S-adenosyl-L-methionine = N(7)-methylguanosine(527) in 16S rRNA + S-adenosyl-L-homocysteine. Its function is as follows. Specifically methylates the N7 position of guanine in position 527 of 16S rRNA. In Vibrio cholerae serotype O1 (strain ATCC 39315 / El Tor Inaba N16961), this protein is Ribosomal RNA small subunit methyltransferase G.